Here is a 393-residue protein sequence, read N- to C-terminus: Chorismate synthase (393 aa).

NADP(+)-binding residues include Arg-40 and Arg-46. FMN contacts are provided by residues 129 to 131 (RAS), 250 to 251 (QA), Gly-301, 316 to 320 (KPIST), and Arg-342.

It belongs to the chorismate synthase family. In terms of assembly, homotetramer. The cofactor is FMNH2.

The enzyme catalyses 5-O-(1-carboxyvinyl)-3-phosphoshikimate = chorismate + phosphate. The protein operates within metabolic intermediate biosynthesis; chorismate biosynthesis; chorismate from D-erythrose 4-phosphate and phosphoenolpyruvate: step 7/7. Its function is as follows. Catalyzes the anti-1,4-elimination of the C-3 phosphate and the C-6 proR hydrogen from 5-enolpyruvylshikimate-3-phosphate (EPSP) to yield chorismate, which is the branch point compound that serves as the starting substrate for the three terminal pathways of aromatic amino acid biosynthesis. This reaction introduces a second double bond into the aromatic ring system. The chain is Chorismate synthase from Acidobacterium capsulatum (strain ATCC 51196 / DSM 11244 / BCRC 80197 / JCM 7670 / NBRC 15755 / NCIMB 13165 / 161).